A 223-amino-acid polypeptide reads, in one-letter code: Sigma non-opioid intracellular receptor 1 (223 aa).

Residues 1–9 (MQWAAGRRW) are Lumenal-facing. The interval 2–8 (QWAAGRR) is targeting to endoplasmic reticulum-associated lipid droplets. The chain crosses the membrane as a helical span at residues 10-30 (AWITLFLTIVAVLIQAVWLWL). At 31 to 223 (GTQSFVFQRE…LTTYLFGQDS (193 aa)) the chain is on the cytoplasmic side. The interval 99 to 106 (SLSEYVLL) is important for ligand-binding. Residues 177-223 (VIPSTLAFALSDTIFSTQDFLTLFYTLRAYARGLRLELTTYLFGQDS) form a C-terminal hydrophobic region region.

This sequence belongs to the ERG2 family. As to quaternary structure, homotrimer. Forms a ternary complex with ANK2 and ITPR3. The complex is disrupted by agonists. Interacts with KCNA4. Interacts with KCNA2; cocaine consumption leads to increased interaction. Interacts with RNF112 in an oxidative stress-regulated manner.

The protein resides in the nucleus inner membrane. Its subcellular location is the nucleus outer membrane. It localises to the nucleus envelope. The protein localises to the cytoplasmic vesicle. It is found in the endoplasmic reticulum membrane. The protein resides in the membrane. Its subcellular location is the lipid droplet. It localises to the cell junction. The protein localises to the cell membrane. It is found in the cell projection. The protein resides in the growth cone. Its subcellular location is the postsynaptic density membrane. In terms of biological role, functions in lipid transport from the endoplasmic reticulum and is involved in a wide array of cellular functions probably through regulation of the biogenesis of lipid microdomains at the plasma membrane. Involved in the regulation of different receptors it plays a role in BDNF signaling and EGF signaling. Also regulates ion channels like the potassium channel and could modulate neurotransmitter release. Plays a role in calcium signaling through modulation together with ANK2 of the ITP3R-dependent calcium efflux at the endoplasmic reticulum. Plays a role in several other cell functions including proliferation, survival and death. Originally identified for its ability to bind various psychoactive drugs it is involved in learning processes, memory and mood alteration. Necessary for proper mitochondrial axonal transport in motor neurons, in particular the retrograde movement of mitochondria. Plays a role in protecting cells against oxidative stress-induced cell death via its interaction with RNF112. This chain is Sigma non-opioid intracellular receptor 1 (SIGMAR1), found in Trichosurus vulpecula (Brush-tailed possum).